A 374-amino-acid polypeptide reads, in one-letter code: Tryptophan--tRNA ligase (374 aa).

The 'HIGH' region motif lies at 81–89 (PSGPVHIGH). Residues 258–262 (KMSAS) carry the 'KMSKS' region motif.

It belongs to the class-I aminoacyl-tRNA synthetase family.

It localises to the cytoplasm. It carries out the reaction tRNA(Trp) + L-tryptophan + ATP = L-tryptophyl-tRNA(Trp) + AMP + diphosphate + H(+). The sequence is that of Tryptophan--tRNA ligase from Pyrobaculum arsenaticum (strain DSM 13514 / JCM 11321 / PZ6).